A 140-amino-acid polypeptide reads, in one-letter code: Nucleoside diphosphate kinase (140 aa).

Lys11, Phe59, Arg87, Thr93, Arg104, and Asn114 together coordinate ATP. His117 serves as the catalytic Pros-phosphohistidine intermediate.

It belongs to the NDK family. In terms of assembly, homotetramer. Mg(2+) is required as a cofactor.

The protein resides in the cytoplasm. The catalysed reaction is a 2'-deoxyribonucleoside 5'-diphosphate + ATP = a 2'-deoxyribonucleoside 5'-triphosphate + ADP. It catalyses the reaction a ribonucleoside 5'-diphosphate + ATP = a ribonucleoside 5'-triphosphate + ADP. Its function is as follows. Major role in the synthesis of nucleoside triphosphates other than ATP. The ATP gamma phosphate is transferred to the NDP beta phosphate via a ping-pong mechanism, using a phosphorylated active-site intermediate. The polypeptide is Nucleoside diphosphate kinase (Brucella anthropi (strain ATCC 49188 / DSM 6882 / CCUG 24695 / JCM 21032 / LMG 3331 / NBRC 15819 / NCTC 12168 / Alc 37) (Ochrobactrum anthropi)).